The chain runs to 104 residues: Large ribosomal subunit protein uL24 (104 aa).

The protein belongs to the universal ribosomal protein uL24 family. As to quaternary structure, part of the 50S ribosomal subunit.

Functionally, one of two assembly initiator proteins, it binds directly to the 5'-end of the 23S rRNA, where it nucleates assembly of the 50S subunit. One of the proteins that surrounds the polypeptide exit tunnel on the outside of the subunit. This chain is Large ribosomal subunit protein uL24, found in Nitrobacter hamburgensis (strain DSM 10229 / NCIMB 13809 / X14).